We begin with the raw amino-acid sequence, 386 residues long: Lipoyl synthase, mitochondrial (386 aa).

[4Fe-4S] cluster is bound by residues Cys-115, Cys-120, Cys-126, Cys-146, Cys-150, Cys-153, and Ser-362. Residues 131–351 (ETGTATATIM…QKLGMEMGFR (221 aa)) form the Radical SAM core domain.

It belongs to the radical SAM superfamily. Lipoyl synthase family. Requires [4Fe-4S] cluster as cofactor.

Its subcellular location is the mitochondrion. It catalyses the reaction [[Fe-S] cluster scaffold protein carrying a second [4Fe-4S](2+) cluster] + N(6)-octanoyl-L-lysyl-[protein] + 2 oxidized [2Fe-2S]-[ferredoxin] + 2 S-adenosyl-L-methionine + 4 H(+) = [[Fe-S] cluster scaffold protein] + N(6)-[(R)-dihydrolipoyl]-L-lysyl-[protein] + 4 Fe(3+) + 2 hydrogen sulfide + 2 5'-deoxyadenosine + 2 L-methionine + 2 reduced [2Fe-2S]-[ferredoxin]. Its pathway is protein modification; protein lipoylation via endogenous pathway; protein N(6)-(lipoyl)lysine from octanoyl-[acyl-carrier-protein]: step 2/2. Its function is as follows. Catalyzes the radical-mediated insertion of two sulfur atoms into the C-6 and C-8 positions of the octanoyl moiety bound to the lipoyl domains of lipoate-dependent enzymes, thereby converting the octanoylated domains into lipoylated derivatives. In Picea sitchensis (Sitka spruce), this protein is Lipoyl synthase, mitochondrial.